The primary structure comprises 321 residues: Basic endochitinase A (321 aa).

Residues 1-19 (MGAFALFAVLAMAVTMAVA) form the signal peptide. One can recognise a Chitin-binding type-1 domain in the interval 20-60 (EQCGSQAGGATCPNCLCCSRFGWCGSTSDYCGDGCQSQCAG). 5 disulfides stabilise this stretch: cysteine 22–cysteine 37, cysteine 31–cysteine 43, cysteine 34–cysteine 61, cysteine 36–cysteine 50, and cysteine 54–cysteine 58. The interval 62 to 79 (GGGGTPVTPTPTPSGGGG) is hinge region (Gly/Pro/Thr-rich). The tract at residues 80-321 (VSSIVSRALF…LDCYNQRPFA (242 aa)) is catalytic. 3 disulfides stabilise this stretch: cysteine 101–cysteine 163, cysteine 175–cysteine 183, and cysteine 301–cysteine 314. Glutamate 145 acts as the Proton donor in catalysis.

It belongs to the glycosyl hydrolase 19 family. Chitinase class I subfamily. As to expression, localized in the aleurone cells of the seed endosperm (at protein level).

The catalysed reaction is Random endo-hydrolysis of N-acetyl-beta-D-glucosaminide (1-&gt;4)-beta-linkages in chitin and chitodextrins.. Defense against chitin-containing fungal pathogens. Binds the hyphal tips, lateral walls and septa of fungi and degrades mature chitin. This is Basic endochitinase A from Secale cereale (Rye).